Here is a 146-residue protein sequence, read N- to C-terminus: Endothelial differentiation-related factor 1 homolog (146 aa).

The segment at 13–53 (RKKGSAAQSKSKQAVTAAQRKGEAVETSKKWAAGQNKQHVV) is disordered. Positions 17–31 (SAAQSKSKQAVTAAQ) are enriched in low complexity. Positions 32–41 (RKGEAVETSK) are enriched in basic and acidic residues. An HTH cro/C1-type domain is found at 80–134 (IQQGRQNKGLTQKDLATKINEKPQIIAEYECGKAIPNNQVMGKIERAIGLKLRGK). A DNA-binding region (H-T-H motif) is located at residues 91–110 (QKDLATKINEKPQIIAEYEC).

The protein localises to the nucleus. Functionally, probable transcriptional coactivator. The sequence is that of Endothelial differentiation-related factor 1 homolog (edf1) from Danio rerio (Zebrafish).